Reading from the N-terminus, the 141-residue chain is Large ribosomal subunit protein uL11 (141 aa).

The protein belongs to the universal ribosomal protein uL11 family. Part of the ribosomal stalk of the 50S ribosomal subunit. Interacts with L10 and the large rRNA to form the base of the stalk. L10 forms an elongated spine to which L12 dimers bind in a sequential fashion forming a multimeric L10(L12)X complex. One or more lysine residues are methylated.

Functionally, forms part of the ribosomal stalk which helps the ribosome interact with GTP-bound translation factors. The protein is Large ribosomal subunit protein uL11 of Selenomonas ruminantium.